Here is a 233-residue protein sequence, read N- to C-terminus: 2-C-methyl-D-erythritol 4-phosphate cytidylyltransferase (233 aa).

Belongs to the IspD/TarI cytidylyltransferase family. IspD subfamily.

It carries out the reaction 2-C-methyl-D-erythritol 4-phosphate + CTP + H(+) = 4-CDP-2-C-methyl-D-erythritol + diphosphate. It functions in the pathway isoprenoid biosynthesis; isopentenyl diphosphate biosynthesis via DXP pathway; isopentenyl diphosphate from 1-deoxy-D-xylulose 5-phosphate: step 2/6. Catalyzes the formation of 4-diphosphocytidyl-2-C-methyl-D-erythritol from CTP and 2-C-methyl-D-erythritol 4-phosphate (MEP). This is 2-C-methyl-D-erythritol 4-phosphate cytidylyltransferase from Syntrophotalea carbinolica (strain DSM 2380 / NBRC 103641 / GraBd1) (Pelobacter carbinolicus).